The chain runs to 179 residues: Tetratricopeptide repeat protein 36 (179 aa).

TPR repeat units lie at residues S43–N76, S78–K110, and C115–F148.

This sequence belongs to the TTC36 family.

In Caenorhabditis elegans, this protein is Tetratricopeptide repeat protein 36.